Consider the following 1092-residue polypeptide: Probable arabinosyltransferase A (1092 aa).

Helical transmembrane passes span 21-43 (IARLIAVVAGIAGVLLCGLVPLL), 214-233 (AVMVLGLACVIGSIVALALL), 249-271 (GLWTWITDTGVIGGLLIWHIVGA), 324-346 (VWMRLPATAAAIATWLIISRCVL), 353-372 (VAANRVAMLTAGATFLAAWL), 382-399 (PLIAFAVITVWMLVENSI), 404-426 (LWPAAVAIVIAMFSVTLAPQGLI), 517-534 (FAVLVLLLCLFGLIMVLL), 541-563 (GAVSGPLWRLCGSTAIGLLLLIL), 568-590 (WAIQFGAFAGLAGALGGVTAFAF), 602-624 (ALYVTALLFILAWATSGLNGWFY), 639-661 (IAHYPVTTIFLVLAIVGGLLAGW), and 682-704 (ALASTPLLIVATIMVVLELGSMV). Positions 772–798 (PSGVSEHLEPEPVGTNPGTPNSEGPVD) are disordered.

It belongs to the emb family.

The protein localises to the cell membrane. Arabinosyl transferase responsible for the polymerization of arabinose into the arabinan of arabinogalactan. This Mycolicibacterium smegmatis (Mycobacterium smegmatis) protein is Probable arabinosyltransferase A (embA).